We begin with the raw amino-acid sequence, 240 residues long: Probable transcriptional regulatory protein OEOE_0768 (240 aa).

The disordered stretch occupies residues 1 to 21; that stretch reads MSGHSKWHNIQGRKNAQDAKR.

It belongs to the TACO1 family.

Its subcellular location is the cytoplasm. This chain is Probable transcriptional regulatory protein OEOE_0768, found in Oenococcus oeni (strain ATCC BAA-331 / PSU-1).